Consider the following 346-residue polypeptide: Dihydroorotase (346 aa).

Residues histidine 13 and histidine 15 each coordinate Zn(2+). Substrate is bound by residues histidine 15–arginine 17 and asparagine 41. The Zn(2+) site is built by lysine 99, histidine 136, and histidine 174. Lysine 99 is modified (N6-carboxylysine). Substrate is bound at residue histidine 136. A substrate-binding site is contributed by leucine 219. Aspartate 247 serves as a coordination point for Zn(2+). Aspartate 247 is an active-site residue. The substrate site is built by histidine 251 and alanine 263.

This sequence belongs to the metallo-dependent hydrolases superfamily. DHOase family. Class II DHOase subfamily. In terms of assembly, homodimer. Zn(2+) is required as a cofactor.

It catalyses the reaction (S)-dihydroorotate + H2O = N-carbamoyl-L-aspartate + H(+). It participates in pyrimidine metabolism; UMP biosynthesis via de novo pathway; (S)-dihydroorotate from bicarbonate: step 3/3. Functionally, catalyzes the reversible cyclization of carbamoyl aspartate to dihydroorotate. This chain is Dihydroorotase, found in Rhizobium leguminosarum bv. trifolii (strain WSM2304).